A 266-amino-acid chain; its full sequence is DNA-directed RNA polymerase subunit Rpo3 (266 aa).

3 residues coordinate [3Fe-4S] cluster: cysteine 205, cysteine 208, and cysteine 211.

Belongs to the archaeal Rpo3/eukaryotic RPB3 RNA polymerase subunit family. Part of the RNA polymerase complex. It depends on [3Fe-4S] cluster as a cofactor.

The protein localises to the cytoplasm. It carries out the reaction RNA(n) + a ribonucleoside 5'-triphosphate = RNA(n+1) + diphosphate. Its function is as follows. DNA-dependent RNA polymerase (RNAP) catalyzes the transcription of DNA into RNA using the four ribonucleoside triphosphates as substrates. The protein is DNA-directed RNA polymerase subunit Rpo3 of Methanosarcina mazei (strain ATCC BAA-159 / DSM 3647 / Goe1 / Go1 / JCM 11833 / OCM 88) (Methanosarcina frisia).